The following is a 305-amino-acid chain: NADH-cytochrome b5 reductase 1 (305 aa).

A helical transmembrane segment spans residues 8–28 (VLLASLGVGLFTLFGLALGTY). Residues 44-156 (DEKYLLRLLD…RGPSGLLSYA (113 aa)) form the FAD-binding FR-type domain. FAD is bound by residues 136–166 (DSLKIGDVVEFRGPSGLLSYAGKGNFNIQPN) and 175–210 (VAKKLGMIAGGTGITPMLQLIRAILKVPEDPTQCFL).

Belongs to the flavoprotein pyridine nucleotide cytochrome reductase family. Requires FAD as cofactor.

It localises to the membrane. It carries out the reaction 2 Fe(III)-[cytochrome b5] + NADH = 2 Fe(II)-[cytochrome b5] + NAD(+) + H(+). Functionally, NADH-cytochrome b5 reductases are involved in desaturation and elongation of fatty acids, cholesterol biosynthesis, drug metabolism, and, in erythrocyte, methemoglobin reduction. The chain is NADH-cytochrome b5 reductase 1 (Cyb5r1) from Rattus norvegicus (Rat).